The following is a 331-amino-acid chain: Ketol-acid reductoisomerase (NADP(+)) (331 aa).

The region spanning 2–182 (ARMYYDADAN…GGTRAGILET (181 aa)) is the KARI N-terminal Rossmann domain. NADP(+) is bound by residues 25–28 (YGSQ), serine 51, serine 53, and 83–86 (DEVQ). Histidine 108 is a catalytic residue. Residue glycine 134 coordinates NADP(+). One can recognise a KARI C-terminal knotted domain in the interval 183–328 (SFREETETDL…KDLRAMFSWL (146 aa)). Mg(2+)-binding residues include aspartate 191, glutamate 195, glutamate 227, and glutamate 231. Position 252 (serine 252) interacts with substrate.

It belongs to the ketol-acid reductoisomerase family. Requires Mg(2+) as cofactor.

The enzyme catalyses (2R)-2,3-dihydroxy-3-methylbutanoate + NADP(+) = (2S)-2-acetolactate + NADPH + H(+). It carries out the reaction (2R,3R)-2,3-dihydroxy-3-methylpentanoate + NADP(+) = (S)-2-ethyl-2-hydroxy-3-oxobutanoate + NADPH + H(+). Its pathway is amino-acid biosynthesis; L-isoleucine biosynthesis; L-isoleucine from 2-oxobutanoate: step 2/4. It functions in the pathway amino-acid biosynthesis; L-valine biosynthesis; L-valine from pyruvate: step 2/4. Involved in the biosynthesis of branched-chain amino acids (BCAA). Catalyzes an alkyl-migration followed by a ketol-acid reduction of (S)-2-acetolactate (S2AL) to yield (R)-2,3-dihydroxy-isovalerate. In the isomerase reaction, S2AL is rearranged via a Mg-dependent methyl migration to produce 3-hydroxy-3-methyl-2-ketobutyrate (HMKB). In the reductase reaction, this 2-ketoacid undergoes a metal-dependent reduction by NADPH to yield (R)-2,3-dihydroxy-isovalerate. The protein is Ketol-acid reductoisomerase (NADP(+)) of Crocosphaera subtropica (strain ATCC 51142 / BH68) (Cyanothece sp. (strain ATCC 51142)).